A 980-amino-acid polypeptide reads, in one-letter code: Valine--tRNA ligase (980 aa).

The short motif at 43–53 (PNVTGTLHMGH) is the 'HIGH' region element. Positions 586–590 (KMSKS) match the 'KMSKS' region motif. K589 contacts ATP. Residues 914 to 978 (LVDMDAERTR…QLTGLREQRA (65 aa)) are a coiled coil.

This sequence belongs to the class-I aminoacyl-tRNA synthetase family. ValS type 1 subfamily. In terms of assembly, monomer.

Its subcellular location is the cytoplasm. The enzyme catalyses tRNA(Val) + L-valine + ATP = L-valyl-tRNA(Val) + AMP + diphosphate. In terms of biological role, catalyzes the attachment of valine to tRNA(Val). As ValRS can inadvertently accommodate and process structurally similar amino acids such as threonine, to avoid such errors, it has a 'posttransfer' editing activity that hydrolyzes mischarged Thr-tRNA(Val) in a tRNA-dependent manner. This Xanthomonas euvesicatoria pv. vesicatoria (strain 85-10) (Xanthomonas campestris pv. vesicatoria) protein is Valine--tRNA ligase.